Reading from the N-terminus, the 545-residue chain is Sphingosine-1-phosphate lyase (545 aa).

The Lumenal segment spans residues 1 to 26; sequence MRPFSGSDCLKPVTEGINRAFGAKEP. The helical; Signal-anchor for type III membrane protein transmembrane segment at 27 to 47 threads the bilayer; it reads WQVATITATTVLGGVWLWTVI. Over 48 to 545 the chain is Cytoplasmic; it reads CQDENLYIRG…HSMYYTPSQK (498 aa). Lys342 carries the N6-(pyridoxal phosphate)lysine modification.

It belongs to the group II decarboxylase family. Sphingosine-1-phosphate lyase subfamily. Pyridoxal 5'-phosphate serves as cofactor. Localized to the developing gut primordium during embryogenesis.

The protein localises to the endoplasmic reticulum membrane. It catalyses the reaction sphinganine 1-phosphate = hexadecanal + phosphoethanolamine. It participates in lipid metabolism; sphingolipid metabolism. Its function is as follows. Cleaves phosphorylated sphingoid bases (PSBs), such as sphingosine-1-phosphate, into fatty aldehydes and phosphoethanolamine. Sphingolipid catabolism is required for normal development including viability, reproduction and muscle development. The polypeptide is Sphingosine-1-phosphate lyase (Drosophila melanogaster (Fruit fly)).